The following is a 571-amino-acid chain: Urease subunit alpha (571 aa).

Residues 133–571 (GGIDTHVHFI…LPLTQRYFLF (439 aa)) enclose the Urease domain. Ni(2+) is bound by residues histidine 138, histidine 140, and lysine 221. Lysine 221 bears the N6-carboxylysine mark. Histidine 223 serves as a coordination point for substrate. Residues histidine 250 and histidine 276 each coordinate Ni(2+). Histidine 324 functions as the Proton donor in the catalytic mechanism. Aspartate 364 provides a ligand contact to Ni(2+).

The protein belongs to the metallo-dependent hydrolases superfamily. Urease alpha subunit family. Heterotrimer of UreA (gamma), UreB (beta) and UreC (alpha) subunits. Three heterotrimers associate to form the active enzyme. Ni cation is required as a cofactor. Carboxylation allows a single lysine to coordinate two nickel ions.

Its subcellular location is the cytoplasm. The enzyme catalyses urea + 2 H2O + H(+) = hydrogencarbonate + 2 NH4(+). It participates in nitrogen metabolism; urea degradation; CO(2) and NH(3) from urea (urease route): step 1/1. This chain is Urease subunit alpha, found in Staphylococcus aureus (strain USA300).